Consider the following 208-residue polypeptide: Small ribosomal subunit protein uS4 (208 aa).

The S4 RNA-binding domain maps to 98 to 161; the sequence is QRLDNLVYRM…KNNPQILRAV (64 aa).

Belongs to the universal ribosomal protein uS4 family. As to quaternary structure, part of the 30S ribosomal subunit. Contacts protein S5. The interaction surface between S4 and S5 is involved in control of translational fidelity.

One of the primary rRNA binding proteins, it binds directly to 16S rRNA where it nucleates assembly of the body of the 30S subunit. In terms of biological role, with S5 and S12 plays an important role in translational accuracy. The polypeptide is Small ribosomal subunit protein uS4 (Campylobacter hominis (strain ATCC BAA-381 / DSM 21671 / CCUG 45161 / LMG 19568 / NCTC 13146 / CH001A)).